The chain runs to 114 residues: ATP synthase subunit beta, mitochondrial (114 aa).

Residue 44-51 (GGAGVGKT) participates in ATP binding.

This sequence belongs to the ATPase alpha/beta chains family. F-type ATPases have 2 components, CF(1) - the catalytic core - and CF(0) - the membrane proton channel. CF(1) has five subunits: alpha(3), beta(3), gamma(1), delta(1), epsilon(1). CF(0) has three main subunits: a, b and c.

Its subcellular location is the mitochondrion. The protein localises to the mitochondrion inner membrane. The catalysed reaction is ATP + H2O + 4 H(+)(in) = ADP + phosphate + 5 H(+)(out). In terms of biological role, mitochondrial membrane ATP synthase (F(1)F(0) ATP synthase or Complex V) produces ATP from ADP in the presence of a proton gradient across the membrane which is generated by electron transport complexes of the respiratory chain. F-type ATPases consist of two structural domains, F(1) - containing the extramembraneous catalytic core, and F(0) - containing the membrane proton channel, linked together by a central stalk and a peripheral stalk. During catalysis, ATP synthesis in the catalytic domain of F(1) is coupled via a rotary mechanism of the central stalk subunits to proton translocation. Subunits alpha and beta form the catalytic core in F(1). Rotation of the central stalk against the surrounding alpha(3)beta(3) subunits leads to hydrolysis of ATP in three separate catalytic sites on the beta subunits. The protein is ATP synthase subunit beta, mitochondrial (atp2) of Penicillium glabrum (Penicillium frequentans).